We begin with the raw amino-acid sequence, 173 residues long: Glutamyl-tRNA(Gln) amidotransferase subunit C, mitochondrial (173 aa).

Belongs to the GatC family. Subunit of the heterotrimeric GatCAB amidotransferase (AdT) complex, composed of A, B and C subunits.

It localises to the mitochondrion. It catalyses the reaction L-glutamyl-tRNA(Gln) + L-glutamine + ATP + H2O = L-glutaminyl-tRNA(Gln) + L-glutamate + ADP + phosphate + H(+). Functionally, allows the formation of correctly charged Gln-tRNA(Gln) through the transamidation of misacylated Glu-tRNA(Gln) in the mitochondria. The reaction takes place in the presence of glutamine and ATP through an activated gamma-phospho-Glu-tRNA(Gln). The protein is Glutamyl-tRNA(Gln) amidotransferase subunit C, mitochondrial of Drosophila persimilis (Fruit fly).